The following is a 79-amino-acid chain: Large ribosomal subunit protein bL28 (79 aa).

Belongs to the bacterial ribosomal protein bL28 family.

This is Large ribosomal subunit protein bL28 from Porphyromonas gingivalis (strain ATCC 33277 / DSM 20709 / CIP 103683 / JCM 12257 / NCTC 11834 / 2561).